A 93-amino-acid polypeptide reads, in one-letter code: Small ribosomal subunit protein bS20c (93 aa).

It belongs to the bacterial ribosomal protein bS20 family.

Its subcellular location is the plastid. The protein resides in the chloroplast. Binds directly to 16S ribosomal RNA. This Trieres chinensis (Marine centric diatom) protein is Small ribosomal subunit protein bS20c.